A 121-amino-acid polypeptide reads, in one-letter code: Putative RNase MJ1216 (121 aa).

Active-site residues include arginine 76 and histidine 81. An RX(4)HXY motif motif is present at residues 76–83; the sequence is RDKLIHQY. The residue at position 83 (tyrosine 83) is an O-di-AMP-tyrosine.

It belongs to the HepT RNase toxin family. Homodimer, probably forms a complex with antitoxin MJ1215 or MJ1217. In terms of processing, modified by antitoxin MJ1215 or MJ1217; probably at least 2 successive AMPylation events occur on Tyr-83.

Probable toxic component of a putative type VII toxin-antitoxin (TA) system, probably an RNase. Probably neutralized by antitoxin MJ1215 or MJ1217. Neutralization may be due to AMPylation by antitoxin. The sequence is that of Putative RNase MJ1216 from Methanocaldococcus jannaschii (strain ATCC 43067 / DSM 2661 / JAL-1 / JCM 10045 / NBRC 100440) (Methanococcus jannaschii).